Consider the following 105-residue polypeptide: Small ribosomal subunit protein eS10A (105 aa).

This sequence belongs to the eukaryotic ribosomal protein eS10 family. As to quaternary structure, component of the small ribosomal subunit (SSU). Mature yeast ribosomes consist of a small (40S) and a large (60S) subunit. The 40S small subunit contains 1 molecule of ribosomal RNA (18S rRNA) and 33 different proteins (encoded by 57 genes). The large 60S subunit contains 3 rRNA molecules (25S, 5.8S and 5S rRNA) and 46 different proteins (encoded by 81 genes). eS10 interacts with GCN1 (via middle region); this interaction is direct and promotes GCN2 kinase activity. Post-translationally, the N-terminus is not modified.

Its subcellular location is the cytoplasm. Functionally, component of the ribosome, a large ribonucleoprotein complex responsible for the synthesis of proteins in the cell. The small ribosomal subunit (SSU) binds messenger RNAs (mRNAs) and translates the encoded message by selecting cognate aminoacyl-transfer RNA (tRNA) molecules. The large subunit (LSU) contains the ribosomal catalytic site termed the peptidyl transferase center (PTC), which catalyzes the formation of peptide bonds, thereby polymerizing the amino acids delivered by tRNAs into a polypeptide chain. The nascent polypeptides leave the ribosome through a tunnel in the LSU and interact with protein factors that function in enzymatic processing, targeting, and the membrane insertion of nascent chains at the exit of the ribosomal tunnel. eS10 plays a role as a positive regulator of the GCN2 kinase activity by stimulating GCN1-mediated GCN2 activation. The protein is Small ribosomal subunit protein eS10A of Saccharomyces cerevisiae (strain ATCC 204508 / S288c) (Baker's yeast).